The following is a 30-amino-acid chain: VIGGDECNINEHRFLVALYDPDGFFCGGTL.

Belongs to the peptidase S1 family. Snake venom subfamily. In terms of tissue distribution, expressed by the venom gland.

The protein localises to the secreted. Thrombin-like snake venom serine protease that cleaves alpha-chain of fibrinogen (FGA) releases only fibrinopeptide A. Shows coagulant, esterase and amidase activities. The protein is Thrombin-like enzyme LmrSP-2 of Lachesis muta rhombeata (Bushmaster).